The sequence spans 398 residues: Protein RecA (398 aa).

83–90 (GPESSGKT) lines the ATP pocket. Residues 351–398 (AGQKNDKKSKLEEKANAGAGISEASEPDSSAEEDFEEFAPIDIGSLGE) form a disordered region. Positions 354-365 (KNDKKSKLEEKA) are enriched in basic and acidic residues. Positions 375 to 389 (SEPDSSAEEDFEEFA) are enriched in acidic residues.

Belongs to the RecA family.

The protein localises to the cytoplasm. Can catalyze the hydrolysis of ATP in the presence of single-stranded DNA, the ATP-dependent uptake of single-stranded DNA by duplex DNA, and the ATP-dependent hybridization of homologous single-stranded DNAs. It interacts with LexA causing its activation and leading to its autocatalytic cleavage. This chain is Protein RecA, found in Ruminococcus albus (strain ATCC 27210 / DSM 20455 / JCM 14654 / NCDO 2250 / 7).